A 264-amino-acid chain; its full sequence is MKPTTIASLQKCKQDKKRFATITAYDYSFAKLFADEGLNVMLVGDSLGMTVQGHDSTLPVTVEDIAYHTAAVRRGAPNCLLLADLPFMAYATPEQAFENAATVMRAGANMVKIEGGEWLVETVKMLTERAVPVCGHLGLTPQSVNIFGGYKVQGRGDEAGDQLLSDALALEAAGAQLLVLECVPVELAKRITEALAIPVIGIGAGNVTDGQILVMHDAFGITGGHIPKFAKNFLAETGDIRAAVRQYMAEVESGVYPGEEHSFH.

Residues D45 and D84 each coordinate Mg(2+). 3-methyl-2-oxobutanoate contacts are provided by residues D45–S46, D84, and K112. E114 is a binding site for Mg(2+). E181 (proton acceptor) is an active-site residue.

The protein belongs to the PanB family. Homodecamer; pentamer of dimers. It depends on Mg(2+) as a cofactor.

It localises to the cytoplasm. It catalyses the reaction 3-methyl-2-oxobutanoate + (6R)-5,10-methylene-5,6,7,8-tetrahydrofolate + H2O = 2-dehydropantoate + (6S)-5,6,7,8-tetrahydrofolate. The protein operates within cofactor biosynthesis; (R)-pantothenate biosynthesis; (R)-pantoate from 3-methyl-2-oxobutanoate: step 1/2. In terms of biological role, catalyzes the reversible reaction in which hydroxymethyl group from 5,10-methylenetetrahydrofolate is transferred onto alpha-ketoisovalerate to form ketopantoate. The polypeptide is 3-methyl-2-oxobutanoate hydroxymethyltransferase (Escherichia coli (strain 55989 / EAEC)).